Consider the following 622-residue polypeptide: Probable potassium transport system protein Kup 1 (622 aa).

12 consecutive transmembrane segments (helical) span residues 7–27 (LLVL…TSPL), 50–70 (LISL…VLFL), 96–116 (TAIL…DAMI), 132–152 (VTPA…LLLF), 165–185 (FFGP…FVHI), 210–230 (VGIV…ALYA), 244–264 (WFTV…AFVL), 282–302 (ALLP…QAVI), 334–354 (IYLP…VFLF), 360–380 (LATA…VLSF), 391–411 (TWWA…FLGA), and 416–436 (IHDG…IMWT).

Belongs to the HAK/KUP transporter (TC 2.A.72) family.

It localises to the cell inner membrane. The enzyme catalyses K(+)(in) + H(+)(in) = K(+)(out) + H(+)(out). Functionally, transport of potassium into the cell. Likely operates as a K(+):H(+) symporter. This Rhizobium meliloti (strain 1021) (Ensifer meliloti) protein is Probable potassium transport system protein Kup 1.